The primary structure comprises 342 residues: Elongation factor Ts (342 aa).

Residues 80–83 form an involved in Mg(2+) ion dislocation from EF-Tu region; the sequence is TDFV.

This sequence belongs to the EF-Ts family.

The protein localises to the cytoplasm. Its function is as follows. Associates with the EF-Tu.GDP complex and induces the exchange of GDP to GTP. It remains bound to the aminoacyl-tRNA.EF-Tu.GTP complex up to the GTP hydrolysis stage on the ribosome. This chain is Elongation factor Ts, found in Lactobacillus delbrueckii subsp. bulgaricus (strain ATCC 11842 / DSM 20081 / BCRC 10696 / JCM 1002 / NBRC 13953 / NCIMB 11778 / NCTC 12712 / WDCM 00102 / Lb 14).